The following is a 198-amino-acid chain: Coagulation factor XIII A chain (198 aa).

The segment at 1–36 (MSESSGTAFGGRRAIPPNTSNAAENDPPTVELQGLV) is disordered. Serine 2 is modified (N-acetylserine). Residues 2–38 (SESSGTAFGGRRAIPPNTSNAAENDPPTVELQGLVPR) constitute a propeptide, activation peptide.

The protein belongs to the transglutaminase superfamily. Transglutaminase family. In terms of assembly, tetramer of two A chains (F13A1) and two B (F13B) chains. It depends on Ca(2+) as a cofactor. In terms of processing, the activation peptide is released by thrombin.

It is found in the cytoplasm. The protein localises to the secreted. The enzyme catalyses L-glutaminyl-[protein] + L-lysyl-[protein] = [protein]-L-lysyl-N(6)-5-L-glutamyl-[protein] + NH4(+). Factor XIII is activated by thrombin and calcium ion to a transglutaminase that catalyzes the formation of gamma-glutamyl-epsilon-lysine cross-links between fibrin chains, thus stabilizing the fibrin clot. Also cross-link alpha-2-plasmin inhibitor, or fibronectin, to the alpha chains of fibrin. The polypeptide is Coagulation factor XIII A chain (F13A1) (Bos taurus (Bovine)).